An 844-amino-acid polypeptide reads, in one-letter code: Aminopeptidase N (844 aa).

Substrate is bound by residues E120 and 253 to 257; that span reads GAMEN. H289 serves as a coordination point for Zn(2+). Catalysis depends on E290, which acts as the Proton acceptor. 2 residues coordinate Zn(2+): H293 and E312.

Belongs to the peptidase M1 family. Monomer. It depends on Zn(2+) as a cofactor.

It localises to the cytoplasm. The enzyme catalyses Release of an N-terminal amino acid, Xaa-|-Yaa- from a peptide, amide or arylamide. Xaa is preferably Ala, but may be most amino acids including Pro (slow action). When a terminal hydrophobic residue is followed by a prolyl residue, the two may be released as an intact Xaa-Pro dipeptide.. Functionally, aminopeptidase N is involved in the degradation of intracellular peptides generated by protein breakdown during normal growth as well as in response to nutrient starvation. In Lactobacillus helveticus (Lactobacillus suntoryeus), this protein is Aminopeptidase N (pepN).